A 268-amino-acid chain; its full sequence is Tryptophan synthase alpha chain (268 aa).

Catalysis depends on proton acceptor residues Glu49 and Asp60.

The protein belongs to the TrpA family. Tetramer of two alpha and two beta chains.

It catalyses the reaction (1S,2R)-1-C-(indol-3-yl)glycerol 3-phosphate + L-serine = D-glyceraldehyde 3-phosphate + L-tryptophan + H2O. It functions in the pathway amino-acid biosynthesis; L-tryptophan biosynthesis; L-tryptophan from chorismate: step 5/5. In terms of biological role, the alpha subunit is responsible for the aldol cleavage of indoleglycerol phosphate to indole and glyceraldehyde 3-phosphate. This is Tryptophan synthase alpha chain from Vibrio metschnikovii.